A 652-amino-acid polypeptide reads, in one-letter code: Acetyl-coenzyme A synthetase (652 aa).

CoA-binding positions include 191-194, T311, and N335; that span reads RAGR. ATP-binding positions include 387–389, 411–416, D500, and R515; these read GEP and DTWWQT. Position 523 (S523) interacts with CoA. R526 serves as a coordination point for ATP. Mg(2+)-binding residues include V537, H539, and I542. A CoA-binding site is contributed by R584. N6-acetyllysine is present on K609.

This sequence belongs to the ATP-dependent AMP-binding enzyme family. Mg(2+) serves as cofactor. In terms of processing, acetylated. Deacetylation by the SIR2-homolog deacetylase activates the enzyme.

It carries out the reaction acetate + ATP + CoA = acetyl-CoA + AMP + diphosphate. Functionally, catalyzes the conversion of acetate into acetyl-CoA (AcCoA), an essential intermediate at the junction of anabolic and catabolic pathways. Acs undergoes a two-step reaction. In the first half reaction, Acs combines acetate with ATP to form acetyl-adenylate (AcAMP) intermediate. In the second half reaction, it can then transfer the acetyl group from AcAMP to the sulfhydryl group of CoA, forming the product AcCoA. Enables the cell to use acetate during aerobic growth to generate energy via the TCA cycle, and biosynthetic compounds via the glyoxylate shunt. Acetylates CheY, the response regulator involved in flagellar movement and chemotaxis. The chain is Acetyl-coenzyme A synthetase from Yersinia pseudotuberculosis serotype I (strain IP32953).